The primary structure comprises 215 residues: Cytochrome b6 (215 aa).

A helical membrane pass occupies residues Ile32 to Phe52. Cys35 lines the heme c pocket. Heme b-binding residues include His86 and His100. A run of 3 helical transmembrane segments spans residues Ala90 to Phe110, Leu116 to Tyr136, and Leu186 to Ile206. Residues His187 and His202 each contribute to the heme b site.

This sequence belongs to the cytochrome b family. PetB subfamily. The 4 large subunits of the cytochrome b6-f complex are cytochrome b6, subunit IV (17 kDa polypeptide, PetD), cytochrome f and the Rieske protein, while the 4 small subunits are PetG, PetL, PetM and PetN. The complex functions as a dimer. It depends on heme b as a cofactor. The cofactor is heme c.

The protein resides in the plastid. It localises to the chloroplast thylakoid membrane. Functionally, component of the cytochrome b6-f complex, which mediates electron transfer between photosystem II (PSII) and photosystem I (PSI), cyclic electron flow around PSI, and state transitions. This is Cytochrome b6 from Pelargonium hortorum (Common geranium).